Consider the following 232-residue polypeptide: 5'-methylthioadenosine/S-adenosylhomocysteine nucleosidase (232 aa).

The active-site Proton acceptor is the E12. Substrate is bound by residues G78, I152, and 173–174 (ME). D197 functions as the Proton donor in the catalytic mechanism.

The protein belongs to the PNP/UDP phosphorylase family. MtnN subfamily. In terms of assembly, homodimer.

It catalyses the reaction S-adenosyl-L-homocysteine + H2O = S-(5-deoxy-D-ribos-5-yl)-L-homocysteine + adenine. The catalysed reaction is S-methyl-5'-thioadenosine + H2O = 5-(methylsulfanyl)-D-ribose + adenine. The enzyme catalyses 5'-deoxyadenosine + H2O = 5-deoxy-D-ribose + adenine. It participates in amino-acid biosynthesis; L-methionine biosynthesis via salvage pathway; S-methyl-5-thio-alpha-D-ribose 1-phosphate from S-methyl-5'-thioadenosine (hydrolase route): step 1/2. Functionally, catalyzes the irreversible cleavage of the glycosidic bond in both 5'-methylthioadenosine (MTA) and S-adenosylhomocysteine (SAH/AdoHcy) to adenine and the corresponding thioribose, 5'-methylthioribose and S-ribosylhomocysteine, respectively. Also cleaves 5'-deoxyadenosine, a toxic by-product of radical S-adenosylmethionine (SAM) enzymes, into 5-deoxyribose and adenine. Thus, is required for in vivo function of the radical SAM enzymes biotin synthase and lipoic acid synthase, that are inhibited by 5'-deoxyadenosine accumulation. This is 5'-methylthioadenosine/S-adenosylhomocysteine nucleosidase from Edwardsiella ictaluri (strain 93-146).